The primary structure comprises 159 residues: Nudix hydrolase DR_1025 (159 aa).

The Mg(2+) site is built by methionine 1, arginine 14, and serine 49. ATP is bound at residue 1-6 (MEHDER). Residues 11-144 (VELRAAGVVL…QIRMYQTKLF (134 aa)) form the Nudix hydrolase domain. 50–51 (GA) serves as a coordination point for ATP. The Nudix box motif lies at 50 to 71 (GAVEDGENPQDAAVREACEETG). Positions 53 and 65 each coordinate Mg(2+). An ATP-binding site is contributed by 87-89 (FPD). Arginine 95 contacts Mg(2+).

It belongs to the Nudix hydrolase family. As to quaternary structure, homodimer. It depends on Mg(2+) as a cofactor.

It catalyses the reaction 8-oxo-dGTP + H2O = 8-oxo-dGDP + phosphate + H(+). The enzyme catalyses 8-oxo-GTP + H2O = 8-oxo-GDP + phosphate + H(+). It carries out the reaction P(1),P(4)-bis(5'-adenosyl) tetraphosphate + H2O = AMP + ATP + 2 H(+). In terms of biological role, hydrolase that can act as a nucleoside triphosphatase and a dinucleoside polyphosphate pyrophosphatase. The best substrates are 8-oxo-dGTP and 8-oxo-GTP. Other substrates include Ap4A, dGTP and GTP. May be involved in protection from damage caused by radiation. This Deinococcus radiodurans (strain ATCC 13939 / DSM 20539 / JCM 16871 / CCUG 27074 / LMG 4051 / NBRC 15346 / NCIMB 9279 / VKM B-1422 / R1) protein is Nudix hydrolase DR_1025.